The primary structure comprises 95 residues: Aspartyl/glutamyl-tRNA(Asn/Gln) amidotransferase subunit C (95 aa).

The protein belongs to the GatC family. In terms of assembly, heterotrimer of A, B and C subunits.

The enzyme catalyses L-glutamyl-tRNA(Gln) + L-glutamine + ATP + H2O = L-glutaminyl-tRNA(Gln) + L-glutamate + ADP + phosphate + H(+). It carries out the reaction L-aspartyl-tRNA(Asn) + L-glutamine + ATP + H2O = L-asparaginyl-tRNA(Asn) + L-glutamate + ADP + phosphate + 2 H(+). Allows the formation of correctly charged Asn-tRNA(Asn) or Gln-tRNA(Gln) through the transamidation of misacylated Asp-tRNA(Asn) or Glu-tRNA(Gln) in organisms which lack either or both of asparaginyl-tRNA or glutaminyl-tRNA synthetases. The reaction takes place in the presence of glutamine and ATP through an activated phospho-Asp-tRNA(Asn) or phospho-Glu-tRNA(Gln). The polypeptide is Aspartyl/glutamyl-tRNA(Asn/Gln) amidotransferase subunit C (Thioalkalivibrio sulfidiphilus (strain HL-EbGR7)).